The sequence spans 86 residues: Large ribosomal subunit protein bL31B (86 aa).

The protein belongs to the bacterial ribosomal protein bL31 family. Type B subfamily. As to quaternary structure, part of the 50S ribosomal subunit.

This Cupriavidus necator (strain ATCC 17699 / DSM 428 / KCTC 22496 / NCIMB 10442 / H16 / Stanier 337) (Ralstonia eutropha) protein is Large ribosomal subunit protein bL31B.